A 448-amino-acid chain; its full sequence is MTLFTQTQSNDRIFTVSSLNAEVRLLLENEMGIVWLVGELSNLSMPVSGHWYFTLKDSRAQVKCAMFRGNNRRVTFKPANGTQVLVKARLSLYEPRGDYQLIIESMQPEGDGRLQQQFEQLKMSLAAEGLFAQALKKPLPEQPKRIGIITSKTGAALHDILTVLHRRDPSLPVVIYPTMVQGDGSAISIAQAIGRANARQECDVLIVGRGGGSLEDLWAFNEEIVARTIAASQIPIVSAVGHEVDVTIADFVADMRAPTPSAAAELVSRDITHQTQKIQQKNQQLKNAIRTYLSKREAKTVQLTHRLERQHPQLRLNQQQQHLDDISSRLERAMGRLLSSHHQHVERINYKLSLHSPVQTIKNNQTTLDQRKRRLLDAMDHRLLNANHKLALAAEKLETVSPLATLSRGYSITRDAKGKVIRHIDQVKPGDKLVTKVTDGEIHSTVSE.

This sequence belongs to the XseA family. As to quaternary structure, heterooligomer composed of large and small subunits.

It is found in the cytoplasm. It catalyses the reaction Exonucleolytic cleavage in either 5'- to 3'- or 3'- to 5'-direction to yield nucleoside 5'-phosphates.. Bidirectionally degrades single-stranded DNA into large acid-insoluble oligonucleotides, which are then degraded further into small acid-soluble oligonucleotides. The sequence is that of Exodeoxyribonuclease 7 large subunit from Photobacterium profundum (strain SS9).